Reading from the N-terminus, the 364-residue chain is Methylthioribose-1-phosphate isomerase (364 aa).

The active-site Proton donor is D254.

This sequence belongs to the eIF-2B alpha/beta/delta subunits family. MtnA subfamily.

Its subcellular location is the cytoplasm. It is found in the nucleus. It catalyses the reaction 5-(methylsulfanyl)-alpha-D-ribose 1-phosphate = 5-(methylsulfanyl)-D-ribulose 1-phosphate. Its pathway is amino-acid biosynthesis; L-methionine biosynthesis via salvage pathway; L-methionine from S-methyl-5-thio-alpha-D-ribose 1-phosphate: step 1/6. Catalyzes the interconversion of methylthioribose-1-phosphate (MTR-1-P) into methylthioribulose-1-phosphate (MTRu-1-P). This chain is Methylthioribose-1-phosphate isomerase, found in Drosophila melanogaster (Fruit fly).